Consider the following 330-residue polypeptide: Ketol-acid reductoisomerase (NADP(+)) (330 aa).

One can recognise a KARI N-terminal Rossmann domain in the interval V2–T182. Residues Y25 to Q28, S51, and S53 each bind NADP(+). The active site involves H108. An NADP(+)-binding site is contributed by G134. The region spanning T183–I328 is the KARI C-terminal knotted domain. Mg(2+)-binding residues include D191, E195, E227, and E231. S252 is a substrate binding site.

The protein belongs to the ketol-acid reductoisomerase family. Requires Mg(2+) as cofactor.

It carries out the reaction (2R)-2,3-dihydroxy-3-methylbutanoate + NADP(+) = (2S)-2-acetolactate + NADPH + H(+). It catalyses the reaction (2R,3R)-2,3-dihydroxy-3-methylpentanoate + NADP(+) = (S)-2-ethyl-2-hydroxy-3-oxobutanoate + NADPH + H(+). It participates in amino-acid biosynthesis; L-isoleucine biosynthesis; L-isoleucine from 2-oxobutanoate: step 2/4. It functions in the pathway amino-acid biosynthesis; L-valine biosynthesis; L-valine from pyruvate: step 2/4. Involved in the biosynthesis of branched-chain amino acids (BCAA). Catalyzes an alkyl-migration followed by a ketol-acid reduction of (S)-2-acetolactate (S2AL) to yield (R)-2,3-dihydroxy-isovalerate. In the isomerase reaction, S2AL is rearranged via a Mg-dependent methyl migration to produce 3-hydroxy-3-methyl-2-ketobutyrate (HMKB). In the reductase reaction, this 2-ketoacid undergoes a metal-dependent reduction by NADPH to yield (R)-2,3-dihydroxy-isovalerate. In Frankia alni (strain DSM 45986 / CECT 9034 / ACN14a), this protein is Ketol-acid reductoisomerase (NADP(+)).